A 251-amino-acid polypeptide reads, in one-letter code: tRNA (guanine-N(1)-)-methyltransferase (251 aa).

S-adenosyl-L-methionine-binding positions include glycine 113 and 133-138 (IGDYVL).

Belongs to the RNA methyltransferase TrmD family. As to quaternary structure, homodimer.

The protein localises to the cytoplasm. It catalyses the reaction guanosine(37) in tRNA + S-adenosyl-L-methionine = N(1)-methylguanosine(37) in tRNA + S-adenosyl-L-homocysteine + H(+). Specifically methylates guanosine-37 in various tRNAs. This Pectobacterium carotovorum subsp. carotovorum (strain PC1) protein is tRNA (guanine-N(1)-)-methyltransferase.